We begin with the raw amino-acid sequence, 298 residues long: Iron/alpha-ketoglutarate-dependent dioxygenase ausO (298 aa).

Residues histidine 130, aspartate 132, and histidine 211 each contribute to the Fe cation site.

Belongs to the PhyH family. As to quaternary structure, homodimer. It depends on Fe cation as a cofactor.

Its pathway is secondary metabolite biosynthesis; terpenoid biosynthesis. In terms of biological role, iron/alpha-ketoglutarate-dependent dioxygenase; part of the gene cluster that mediates the biosynthesis of calidodehydroaustin, a fungal meroterpenoid. The first step of the pathway is the synthesis of 3,5-dimethylorsellinic acid by the polyketide synthase ausA. 3,5-dimethylorsellinic acid is then prenylated by the polyprenyl transferase ausN. Further epoxidation by the FAD-dependent monooxygenase ausM and cyclization by the probable terpene cyclase ausL lead to the formation of protoaustinoid A. Protoaustinoid A is then oxidized to spiro-lactone preaustinoid A3 by the combined action of the FAD-binding monooxygenases ausB and ausC, and the dioxygenase ausE. Acid-catalyzed keto-rearrangement and ring contraction of the tetraketide portion of preaustinoid A3 by ausJ lead to the formation of preaustinoid A4. The aldo-keto reductase ausK, with the help of ausH, is involved in the next step by transforming preaustinoid A4 into isoaustinone which is in turn hydroxylated by the P450 monooxygenase ausI to form austinolide. The cytochrome P450 monooxygenase ausG modifies austinolide to austinol. Austinol is further acetylated to austin by the O-acetyltransferase ausP, which spontaneously changes to dehydroaustin. The cytochrome P450 monooxygenase ausR then converts dehydroaustin is into 7-dehydrodehydroaustin. The hydroxylation catalyzed by ausR permits the O-acetyltransferase ausQ to add an additional acetyl group to the molecule, leading to the formation of acetoxydehydroaustin. The short chain dehydrogenase ausT catalyzes the reduction of the double bond present between carbon atoms 1 and 2 to convert 7-dehydrodehydroaustin into 1,2-dihydro-7-hydroxydehydroaustin. AusQ catalyzes not only an acetylation reaction but also the addition of the PKS ausV diketide product to 1,2-dihydro-7-hydroxydehydroaustin, forming precalidodehydroaustin. Finally, the iron/alpha-ketoglutarate-dependent dioxygenase converts precalidodehydroaustin into calidodehydroaustin. This chain is Iron/alpha-ketoglutarate-dependent dioxygenase ausO, found in Aspergillus calidoustus.